A 356-amino-acid polypeptide reads, in one-letter code: Peptide chain release factor 1 (356 aa).

Gln233 carries the N5-methylglutamine modification.

The protein belongs to the prokaryotic/mitochondrial release factor family. Methylated by PrmC. Methylation increases the termination efficiency of RF1.

It localises to the cytoplasm. Its function is as follows. Peptide chain release factor 1 directs the termination of translation in response to the peptide chain termination codons UAG and UAA. The protein is Peptide chain release factor 1 of Endomicrobium trichonymphae.